The primary structure comprises 169 residues: uncharacterized protein (169 aa).

This is an uncharacterized protein from Saccharomyces cerevisiae (strain ATCC 204508 / S288c) (Baker's yeast).